Reading from the N-terminus, the 331-residue chain is RNA 3'-terminal phosphate cyclase (331 aa).

ATP contacts are provided by residues glutamine 100 and 276-280; that span reads HLADQ. Histidine 301 serves as the catalytic Tele-AMP-histidine intermediate.

It belongs to the RNA 3'-terminal cyclase family. Type 1 subfamily.

The protein resides in the cytoplasm. It catalyses the reaction a 3'-end 3'-phospho-ribonucleotide-RNA + ATP = a 3'-end 2',3'-cyclophospho-ribonucleotide-RNA + AMP + diphosphate. Catalyzes the conversion of 3'-phosphate to a 2',3'-cyclic phosphodiester at the end of RNA. The mechanism of action of the enzyme occurs in 3 steps: (A) adenylation of the enzyme by ATP; (B) transfer of adenylate to an RNA-N3'P to produce RNA-N3'PP5'A; (C) and attack of the adjacent 2'-hydroxyl on the 3'-phosphorus in the diester linkage to produce the cyclic end product. The biological role of this enzyme is unknown but it is likely to function in some aspects of cellular RNA processing. This is RNA 3'-terminal phosphate cyclase from Methanococcoides burtonii (strain DSM 6242 / NBRC 107633 / OCM 468 / ACE-M).